The sequence spans 338 residues: Ketol-acid reductoisomerase (NADP(+)) (338 aa).

One can recognise a KARI N-terminal Rossmann domain in the interval Met-1–Thr-181. Residues Tyr-24–Gln-27, Arg-47, Ser-50, Ser-52, and Asp-82–Gln-85 each bind NADP(+). Residue His-107 is part of the active site. Gly-133 contributes to the NADP(+) binding site. The KARI C-terminal knotted domain maps to Thr-182–Ile-327. Positions 190, 194, 226, and 230 each coordinate Mg(2+). Substrate is bound at residue Ser-251.

The protein belongs to the ketol-acid reductoisomerase family. Mg(2+) serves as cofactor.

The enzyme catalyses (2R)-2,3-dihydroxy-3-methylbutanoate + NADP(+) = (2S)-2-acetolactate + NADPH + H(+). The catalysed reaction is (2R,3R)-2,3-dihydroxy-3-methylpentanoate + NADP(+) = (S)-2-ethyl-2-hydroxy-3-oxobutanoate + NADPH + H(+). It participates in amino-acid biosynthesis; L-isoleucine biosynthesis; L-isoleucine from 2-oxobutanoate: step 2/4. It functions in the pathway amino-acid biosynthesis; L-valine biosynthesis; L-valine from pyruvate: step 2/4. Involved in the biosynthesis of branched-chain amino acids (BCAA). Catalyzes an alkyl-migration followed by a ketol-acid reduction of (S)-2-acetolactate (S2AL) to yield (R)-2,3-dihydroxy-isovalerate. In the isomerase reaction, S2AL is rearranged via a Mg-dependent methyl migration to produce 3-hydroxy-3-methyl-2-ketobutyrate (HMKB). In the reductase reaction, this 2-ketoacid undergoes a metal-dependent reduction by NADPH to yield (R)-2,3-dihydroxy-isovalerate. In Alcanivorax borkumensis (strain ATCC 700651 / DSM 11573 / NCIMB 13689 / SK2), this protein is Ketol-acid reductoisomerase (NADP(+)).